The following is a 168-amino-acid chain: Small ribosomal subunit protein uS5 (168 aa).

One can recognise an S5 DRBM domain in the interval 13–76 (LEENVVAINR…EDAKRKLITV (64 aa)).

Belongs to the universal ribosomal protein uS5 family. As to quaternary structure, part of the 30S ribosomal subunit. Contacts proteins S4 and S8.

In terms of biological role, with S4 and S12 plays an important role in translational accuracy. Functionally, located at the back of the 30S subunit body where it stabilizes the conformation of the head with respect to the body. This chain is Small ribosomal subunit protein uS5, found in Leuconostoc mesenteroides subsp. mesenteroides (strain ATCC 8293 / DSM 20343 / BCRC 11652 / CCM 1803 / JCM 6124 / NCDO 523 / NBRC 100496 / NCIMB 8023 / NCTC 12954 / NRRL B-1118 / 37Y).